A 74-amino-acid chain; its full sequence is Benzylsuccinate synthase beta subunit (74 aa).

In terms of assembly, heterohexamer composed of 2 alpha subunits, 2 beta subunits and 2 gamma subunits.

The catalysed reaction is toluene + fumarate = 2-benzylsuccinate. It participates in xenobiotic degradation; toluene degradation. Its activity is regulated as follows. Activated by the benzylsuccinate synthase activating enzyme BssD. Rapidly inactivated by oxygen. Its function is as follows. Catalyzes the addition of fumarate to the methyl group of toluene, leading to the formation of benzylsuccinate. This Thauera aromatica protein is Benzylsuccinate synthase beta subunit (bssB).